Consider the following 1035-residue polypeptide: Cell-division control histidine kinase PdhS (1035 aa).

Residues 1–613 (MSGSYPFIDI…HADGSEEPVD (613 aa)) are important for polar localization. Residues 500–533 (QGLANTRAESETPVSETSSIEPVEPTPPVKTRSE) are disordered. The segment at 614–1035 (AHLNAIAWRG…VFPPTRVLAD (422 aa)) is interaction with DivK. The region spanning 659–730 (HVEELKTILD…YLHGLSGNGV (72 aa)) is the PAS domain. A Histidine kinase domain is found at 802–1031 (RISHEIRTPL…VVEIVFPPTR (230 aa)). His-805 carries the post-translational modification Phosphohistidine; by autocatalysis.

As to quaternary structure, interacts with DivK.

The protein resides in the cytoplasm. It catalyses the reaction ATP + protein L-histidine = ADP + protein N-phospho-L-histidine.. Its function is as follows. Functions as a polar differentiation marker. Essential protein that, by localizing in the old pole of dividing cells, controls cell division and maturation, probably through control of DivK phosphorylation status and cellular distribution, which in turn regulates CtrA, a transcriptional regulator of the minB operon. The asymmetrical localization of this protein is probably required for cells to enter a new division cycle. The sequence is that of Cell-division control histidine kinase PdhS (pdhS) from Brucella ovis (strain ATCC 25840 / 63/290 / NCTC 10512).